We begin with the raw amino-acid sequence, 407 residues long: Imidazolonepropionase (407 aa).

The Fe(3+) site is built by His68 and His70. Zn(2+) contacts are provided by His68 and His70. The 4-imidazolone-5-propanoate site is built by Arg77, Tyr140, and His173. Residue Tyr140 participates in N-formimidoyl-L-glutamate binding. His236 contacts Fe(3+). A Zn(2+)-binding site is contributed by His236. Residue Gln239 coordinates 4-imidazolone-5-propanoate. Asp311 provides a ligand contact to Fe(3+). Asp311 is a Zn(2+) binding site. Positions 313 and 315 each coordinate N-formimidoyl-L-glutamate. Thr316 lines the 4-imidazolone-5-propanoate pocket.

The protein belongs to the metallo-dependent hydrolases superfamily. HutI family. The cofactor is Zn(2+). Fe(3+) is required as a cofactor.

It is found in the cytoplasm. The enzyme catalyses 4-imidazolone-5-propanoate + H2O = N-formimidoyl-L-glutamate. Its pathway is amino-acid degradation; L-histidine degradation into L-glutamate; N-formimidoyl-L-glutamate from L-histidine: step 3/3. Its function is as follows. Catalyzes the hydrolytic cleavage of the carbon-nitrogen bond in imidazolone-5-propanoate to yield N-formimidoyl-L-glutamate. It is the third step in the universal histidine degradation pathway. The protein is Imidazolonepropionase of Stenotrophomonas maltophilia (strain R551-3).